The chain runs to 277 residues: Diaminopimelate epimerase (277 aa).

Residues Asn13, Gln46, and Asn65 each contribute to the substrate site. Residue Cys74 is the Proton donor of the active site. Substrate-binding positions include 75 to 76 (GN), Asn158, Asn191, and 209 to 210 (ER). The Proton acceptor role is filled by Cys218. 219–220 (GT) is a substrate binding site.

This sequence belongs to the diaminopimelate epimerase family. Homodimer.

It localises to the cytoplasm. It catalyses the reaction (2S,6S)-2,6-diaminopimelate = meso-2,6-diaminopimelate. Its pathway is amino-acid biosynthesis; L-lysine biosynthesis via DAP pathway; DL-2,6-diaminopimelate from LL-2,6-diaminopimelate: step 1/1. Its function is as follows. Catalyzes the stereoinversion of LL-2,6-diaminopimelate (L,L-DAP) to meso-diaminopimelate (meso-DAP), a precursor of L-lysine and an essential component of the bacterial peptidoglycan. In Nitrosospira multiformis (strain ATCC 25196 / NCIMB 11849 / C 71), this protein is Diaminopimelate epimerase.